The primary structure comprises 333 residues: Flotillin-like protein FloA (333 aa).

The chain crosses the membrane as a helical span at residues 9 to 29 (IVLIVGGIIFLILFFHYVPFF).

It belongs to the flotillin-like FloA family. As to quaternary structure, homooligomerizes.

Its subcellular location is the cell membrane. The protein resides in the membrane raft. Found in functional membrane microdomains (FMM) that may be equivalent to eukaryotic membrane rafts. FMMs are highly dynamic and increase in number as cells age. Flotillins are thought to be important factors in membrane fluidity. The polypeptide is Flotillin-like protein FloA (Bacteroides thetaiotaomicron (strain ATCC 29148 / DSM 2079 / JCM 5827 / CCUG 10774 / NCTC 10582 / VPI-5482 / E50)).